The chain runs to 378 residues: Squalene methyltransferase 1 (378 aa).

The helical transmembrane segment at 17 to 37 (LLTWKGVAGLVVAITLGYLII) threads the bilayer.

This sequence belongs to the class I-like SAM-binding methyltransferase superfamily. Erg6/SMT family.

It localises to the microsome membrane. The catalysed reaction is squalene + 2 S-adenosyl-L-methionine = 3,22-dimethyl-1,2,23,24-tetradehydro-2,3,22,23-tetrahydrosqualene + 2 S-adenosyl-L-homocysteine + 2 H(+). Its function is as follows. Converts squalene to mono- and dimethyl derivatives, but not to tri- and tetramethylated products. Unable to methylate cycloartenol, zymosterol or lanosterol. Methylates both C-3 and C22 positions, but only C-3 position in monomethylated products. Produces mainly dimethylated squalene. The polypeptide is Squalene methyltransferase 1 (TMT-1) (Botryococcus braunii (Green alga)).